The chain runs to 338 residues: Fructose-1,6-bisphosphatase class 1 (338 aa).

4 residues coordinate Mg(2+): glutamate 91, aspartate 113, leucine 115, and aspartate 116. Substrate is bound by residues 116–119, asparagine 208, and lysine 274; that span reads DGSS. Glutamate 280 is a Mg(2+) binding site.

This sequence belongs to the FBPase class 1 family. Homotetramer. Mg(2+) serves as cofactor.

It is found in the cytoplasm. It carries out the reaction beta-D-fructose 1,6-bisphosphate + H2O = beta-D-fructose 6-phosphate + phosphate. It participates in carbohydrate biosynthesis; gluconeogenesis. The sequence is that of Fructose-1,6-bisphosphatase class 1 from Ralstonia pickettii (strain 12J).